Reading from the N-terminus, the 235-residue chain is tRNA (cytidine-2'-O-)-methyltransferase TrmJ (235 aa).

S-adenosyl-L-methionine-binding positions include 77 to 79 (TSS), glycine 111, isoleucine 131, and 138 to 140 (PVL).

The protein belongs to the class IV-like SAM-binding methyltransferase superfamily. RNA methyltransferase TrmH family. In terms of assembly, homodimer.

The protein localises to the cytoplasm. The catalysed reaction is cytidine(32) in tRNA + S-adenosyl-L-methionine = 2'-O-methylcytidine(32) in tRNA + S-adenosyl-L-homocysteine + H(+). Its function is as follows. Catalyzes the formation of 2'O-methylated cytidine (Cm32) at position 32 in tRNA. Is specific for cytidine. This chain is tRNA (cytidine-2'-O-)-methyltransferase TrmJ, found in Sulfolobus acidocaldarius (strain ATCC 33909 / DSM 639 / JCM 8929 / NBRC 15157 / NCIMB 11770).